Reading from the N-terminus, the 711-residue chain is Ribosomal RNA large subunit methyltransferase K/L (711 aa).

The THUMP domain occupies 43-154 (TLYRTLLWSR…RENLVISLDL (112 aa)).

The protein belongs to the methyltransferase superfamily. RlmKL family.

It is found in the cytoplasm. The catalysed reaction is guanosine(2445) in 23S rRNA + S-adenosyl-L-methionine = N(2)-methylguanosine(2445) in 23S rRNA + S-adenosyl-L-homocysteine + H(+). The enzyme catalyses guanosine(2069) in 23S rRNA + S-adenosyl-L-methionine = N(2)-methylguanosine(2069) in 23S rRNA + S-adenosyl-L-homocysteine + H(+). In terms of biological role, specifically methylates the guanine in position 2445 (m2G2445) and the guanine in position 2069 (m7G2069) of 23S rRNA. This is Ribosomal RNA large subunit methyltransferase K/L from Haemophilus influenzae (strain PittGG).